A 66-amino-acid chain; its full sequence is Large ribosomal subunit protein bL35 (66 aa).

The segment covering 1–26 (MPKMKTHRGSAKRFKKTASGKLKRGH) has biased composition (basic residues). The interval 1-28 (MPKMKTHRGSAKRFKKTASGKLKRGHAY) is disordered.

This sequence belongs to the bacterial ribosomal protein bL35 family.

This is Large ribosomal subunit protein bL35 from Geobacillus thermodenitrificans (strain NG80-2).